The chain runs to 315 residues: uncharacterized protein (315 aa).

A run of 3 helical transmembrane segments spans residues 19-39 (IGAG…GNVF), 56-76 (TVLV…LHSF), and 81-101 (PLKK…ISLI). The segment covering 154–171 (EDSASSGRTSSSVNQPIQ) has biased composition (polar residues). The tract at residues 154–214 (EDSASSGRTS…EREARAQEHD (61 aa)) is disordered. A compositionally biased stretch (basic and acidic residues) spans 203–214 (GGEREARAQEHD).

This sequence belongs to the ATPase C chain family.

It is found in the mitochondrion membrane. This is an uncharacterized protein from Arabidopsis thaliana (Mouse-ear cress).